The primary structure comprises 138 residues: uncharacterized protein (138 aa).

35–42 lines the ATP pocket; it reads DFIGSFYN.

This is an uncharacterized protein from Acanthamoeba polyphaga mimivirus (APMV).